The chain runs to 150 residues: Large-conductance mechanosensitive channel (150 aa).

A run of 2 helical transmembrane segments spans residues 19–39 (VGII…SDVL) and 85–105 (GIFL…FMLI).

This sequence belongs to the MscL family. In terms of assembly, homopentamer.

The protein localises to the cell inner membrane. Channel that opens in response to stretch forces in the membrane lipid bilayer. May participate in the regulation of osmotic pressure changes within the cell. In Chlorobium limicola (strain DSM 245 / NBRC 103803 / 6330), this protein is Large-conductance mechanosensitive channel.